Consider the following 265-residue polypeptide: Type III pantothenate kinase (265 aa).

6–13 provides a ligand contact to ATP; it reads DVGNTNIV. Substrate contacts are provided by residues tyrosine 100 and 107–110; that span reads GADR. Aspartate 109 acts as the Proton acceptor in catalysis. Aspartate 129 contacts K(+). Position 132 (threonine 132) interacts with ATP. Position 184 (threonine 184) interacts with substrate.

The protein belongs to the type III pantothenate kinase family. Homodimer. It depends on NH4(+) as a cofactor. K(+) is required as a cofactor.

It localises to the cytoplasm. It carries out the reaction (R)-pantothenate + ATP = (R)-4'-phosphopantothenate + ADP + H(+). It participates in cofactor biosynthesis; coenzyme A biosynthesis; CoA from (R)-pantothenate: step 1/5. Its function is as follows. Catalyzes the phosphorylation of pantothenate (Pan), the first step in CoA biosynthesis. The chain is Type III pantothenate kinase from Alkaliphilus oremlandii (strain OhILAs) (Clostridium oremlandii (strain OhILAs)).